We begin with the raw amino-acid sequence, 65 residues long: uncharacterized protein (65 aa).

It is found in the plastid. The protein resides in the chloroplast. This is an uncharacterized protein from Guillardia theta (Cryptophyte).